The sequence spans 134 residues: TSC22 domain family protein 3 (134 aa).

The interval 1–60 (MNTEMYQTPMEVAVYQLHNFSISFFSSLLGGDVVSVKLDNSASGASVVALDNKIEQAMDL) is AP1-binding. The tract at residues 76–97 (LKEQIRELVEKNSQLERENTLL) is leucine-zipper. Positions 101-134 (ASPEQLEKFQSRLSPEEPAPEAPETPEAPGGSAV) are disordered. Residue Ser-102 is modified to Phosphoserine. Residue Thr-125 is modified to Phosphothreonine. Positions 125 to 134 (TPEAPGGSAV) are enriched in low complexity.

This sequence belongs to the TSC-22/Dip/Bun family. Can form homodimers, however it is likely to function as a monomer. Interacts with NFKB1. Interacts (via N-terminus) with JUN and FOS; these interactions inhibit the binding of active AP1 to its target DNA. Interacts with MYOD1. Interacts with HDAC1; this interaction affects HDAC1 activity on MYOG promoter and thus inhibits MYOD1 transcriptional activity.

The protein resides in the cytoplasm. Its subcellular location is the nucleus. Protects T-cells from IL2 deprivation-induced apoptosis through the inhibition of FOXO3A transcriptional activity that leads to the down-regulation of the pro-apoptotic factor BCL2L11. In macrophages, plays a role in the anti-inflammatory and immunosuppressive effects of glucocorticoids and IL10. In T-cells, inhibits anti-CD3-induced NFKB1 nuclear translocation and thereby NFKB1 DNA-binding activities. In vitro, suppresses AP-1 transcription factor complex DNA-binding activities. The sequence is that of TSC22 domain family protein 3 (Tsc22d3) from Rattus norvegicus (Rat).